The chain runs to 432 residues: Glutamate-1-semialdehyde 2,1-aminomutase 2 (432 aa).

The residue at position 268 (Lys-268) is an N6-(pyridoxal phosphate)lysine.

It belongs to the class-III pyridoxal-phosphate-dependent aminotransferase family. HemL subfamily. As to quaternary structure, homodimer. Pyridoxal 5'-phosphate is required as a cofactor.

It is found in the cytoplasm. It catalyses the reaction (S)-4-amino-5-oxopentanoate = 5-aminolevulinate. It participates in porphyrin-containing compound metabolism; protoporphyrin-IX biosynthesis; 5-aminolevulinate from L-glutamyl-tRNA(Glu): step 2/2. The sequence is that of Glutamate-1-semialdehyde 2,1-aminomutase 2 from Listeria monocytogenes serotype 4b (strain F2365).